The chain runs to 101 residues: Small ribosomal subunit protein uS14 (101 aa).

It belongs to the universal ribosomal protein uS14 family. As to quaternary structure, part of the 30S ribosomal subunit. Contacts proteins S3 and S10.

Binds 16S rRNA, required for the assembly of 30S particles and may also be responsible for determining the conformation of the 16S rRNA at the A site. This chain is Small ribosomal subunit protein uS14, found in Haemophilus influenzae (strain 86-028NP).